Consider the following 98-residue polypeptide: MTTVGVSLFRRSPEKITMKIATFLGLSFLLIASYVLICEAQHPGFQELLILEENMRDPENSKERSCAKPRENCNRMNILCCRGECVCPTFGDCFRYGD.

Positions methionine 1–alanine 40 are cleaved as a signal peptide. Residues glutamine 41–arginine 64 constitute a propeptide that is removed on maturation. 2 disulfide bridges follow: cysteine 66-cysteine 81 and cysteine 73-cysteine 85.

It belongs to the hainantoxin family. 17 subfamily. Expressed by the venom gland.

The protein resides in the secreted. Its function is as follows. Putative ion channel inhibitor. The sequence is that of Hainantoxin-XVII-2 from Cyriopagopus hainanus (Chinese bird spider).